Consider the following 326-residue polypeptide: Target of rapamycin complex subunit LST8 (326 aa).

Residue Met-1 is modified to N-acetylmethionine. WD repeat units follow at residues 1–37 (MNTSPGTVGSDPVILATAGYDHTVRFWQAHSGICTRT), 40–80 (HQDS…PIIS), 83–122 (GVNKNVASVGFHEDGRWMYTGGEDCTARIWDLRSRNLQCQ), 126–165 (QVNAPINCVCLHPNQAELIVGDQSGAIHIWDLKTDHNEQL), and 168–207 (EPEVSITSAHIDPDASYMAAVNSTGNCYVWNLTGGIGDEV). At Thr-51 the chain carries Phosphothreonine. Residue Lys-86 forms a Glycyl lysine isopeptide (Lys-Gly) (interchain with G-Cter in SUMO3) linkage. Glycyl lysine isopeptide (Lys-Gly) (interchain with G-Cter in SUMO3) cross-links involve residues Lys-215, Lys-245, and Lys-261. The stretch at 218–257 (AHTRYALQCRFSPDSTLLATCSADQTCKIWRTSNFSLMTE) is one WD 6 repeat. The WD 7 repeat unit spans residues 268–309 (SSRGWMWGCAFSGDSQYIVTASSDNLARLWCVETGEIKREYG). Lys-305 is covalently cross-linked (Glycyl lysine isopeptide (Lys-Gly) (interchain with G-Cter in SUMO3); alternate). Glycyl lysine isopeptide (Lys-Gly) (interchain with G-Cter in ubiquitin); alternate cross-links involve residues Lys-305 and Lys-313. A Glycyl lysine isopeptide (Lys-Gly) (interchain with G-Cter in SUMO1); alternate cross-link involves residue Lys-313.

This sequence belongs to the WD repeat LST8 family. As to quaternary structure, part of the mechanistic target of rapamycin complex 1 (mTORC1) which contains MTOR, MLST8 and RPTOR. mTORC1 associates with AKT1S1/PRAS40, which inhibits its activity. mTORC1 binds to and is inhibited by FKBP12-rapamycin. Within mTORC1, interacts directly with MTOR and RPTOR. Component of the mechanistic target of rapamycin complex 2 (mTORC2), consisting in two heterotretramers composed of MTOR, MLST8, RICTOR and MAPKAP1/SIN1. Contrary to mTORC1, mTORC2 does not bind to and is not sensitive to FKBP12-rapamycin. mTORC1 and mTORC2 associate with DEPTOR, which regulates their activity. Interacts with RHEB. Interacts with MEAK7. Interacts with SIK3. Interacts with SLC38A7; this interaction promotes the recruitment of mTORC1 to the lysosome and its subsequent activation. Post-translationally, phosphorylation at Thr-51 by CDK1 promotes ubiquitination by the SCF(FBXW7) complex, followed by degradation. In terms of processing, ubiquitination by the SCF(FBXW7) and SCF(FBXW11) complexes following phosphorylation at Thr-51 by CDK1, leads to its degradation by the proteasome. Ubiquitination at Lys-305 and Lys-313 by TRAF2 via 'Lys-63'-linked polyubiquitin chains inhibits formation of the mTORC2 complex, while promoting formation of the mTORC1 complex: ubiquitination disrupts the interaction between MLST8 and MAPKAP1/SIN1 to favor mTORC1 assembly. Deubiquitination at Lys-305 and Lys-313 by OTUD7B promotes MLST8 interaction with MAPKAP1/SIN1, facilitating mTORC2 assembly. Sumoylation with SUMO1, SUMO2 and SUMO3 promotes assembly of both mTORC1 and mTORC2 complexes.

The protein localises to the lysosome membrane. Its subcellular location is the cytoplasm. Functionally, subunit of both mTORC1 and mTORC2, which regulates cell growth and survival in response to nutrient and hormonal signals. mTORC1 is activated in response to growth factors or amino acids. In response to nutrients, mTORC1 is recruited to the lysosome membrane and promotes protein, lipid and nucleotide synthesis by phosphorylating several substrates, such as ribosomal protein S6 kinase (RPS6KB1 and RPS6KB2) and EIF4EBP1 (4E-BP1). In the same time, it inhibits catabolic pathways by phosphorylating the autophagy initiation components ULK1 and ATG13, as well as transcription factor TFEB, a master regulators of lysosomal biogenesis and autophagy. The mTORC1 complex is inhibited in response to starvation and amino acid depletion. Within mTORC1, MLST8 interacts directly with MTOR and enhances its kinase activity. In nutrient-poor conditions, stabilizes the MTOR-RPTOR interaction and favors RPTOR-mediated inhibition of MTOR activity. As part of the mTORC2 complex, transduces signals from growth factors to pathways involved in proliferation, cytoskeletal organization, lipogenesis and anabolic output. mTORC2 is also activated by growth factors, but seems to be nutrient-insensitive. In response to growth factors, mTORC2 phosphorylates and activates AGC protein kinase family members, including AKT (AKT1, AKT2 and AKT3), PKC (PRKCA, PRKCB and PRKCE) and SGK1. mTORC2 functions upstream of Rho GTPases to regulate the actin cytoskeleton, probably by activating one or more Rho-type guanine nucleotide exchange factors. mTORC2 promotes the serum-induced formation of stress-fibers or F-actin. mTORC2 plays a critical role in AKT1 activation by mediating phosphorylation of different sites depending on the context, such as 'Thr-450', 'Ser-473', 'Ser-477' or 'Thr-479', facilitating the phosphorylation of the activation loop of AKT1 on 'Thr-308' by PDPK1/PDK1 which is a prerequisite for full activation. mTORC2 regulates the phosphorylation of SGK1 at 'Ser-422'. mTORC2 also modulates the phosphorylation of PRKCA on 'Ser-657'. Within mTORC2, MLST8 acts as a bridge between MAPKAP1/SIN1 and MTOR. The polypeptide is Target of rapamycin complex subunit LST8 (Bos taurus (Bovine)).